A 198-amino-acid chain; its full sequence is Small ribosomal subunit protein eS1 (198 aa).

This sequence belongs to the eukaryotic ribosomal protein eS1 family.

The protein is Small ribosomal subunit protein eS1 of Methanospirillum hungatei JF-1 (strain ATCC 27890 / DSM 864 / NBRC 100397 / JF-1).